The sequence spans 183 residues: Threonylcarbamoyl-AMP synthase (183 aa).

Residues 1 to 183 form the YrdC-like domain; the sequence is MNIQQIVEQL…LFTHQLFRQG (183 aa).

This sequence belongs to the SUA5 family. TsaC subfamily.

The protein resides in the cytoplasm. It carries out the reaction L-threonine + hydrogencarbonate + ATP = L-threonylcarbamoyladenylate + diphosphate + H2O. Functionally, required for the formation of a threonylcarbamoyl group on adenosine at position 37 (t(6)A37) in tRNAs that read codons beginning with adenine. Catalyzes the conversion of L-threonine, HCO(3)(-)/CO(2) and ATP to give threonylcarbamoyl-AMP (TC-AMP) as the acyladenylate intermediate, with the release of diphosphate. The sequence is that of Threonylcarbamoyl-AMP synthase from Pasteurella multocida (strain Pm70).